The following is a 361-amino-acid chain: uncharacterized protein (361 aa).

Disordered stretches follow at residues 53–75 and 150–211; these read KNIS…NINN and NYNN…YHHY. The span at 150–198 shows a compositional bias: low complexity; sequence NYNNYNNNNNNNNNNNNNNNNNNNNNNNNNNNNNNKNNNKNNNNKPNNF. The span at 199–211 shows a compositional bias: basic residues; that stretch reads IHHHHHHHHYHHY. The chain crosses the membrane as a helical span at residues 225 to 245; it reads IFIGLMAFLILFILMVIGLLI.

The protein localises to the membrane. This is an uncharacterized protein from Dictyostelium discoideum (Social amoeba).